The chain runs to 560 residues: Hemocyanin, units G and H (560 aa).

A disulfide bridge links cysteine 1 with cysteine 11. Residues cysteine 1–glutamate 184 form a unit G region. Positions cysteine 12 to histidine 14 form a cross-link, 2'-(S-cysteinyl)-histidine (Cys-His). The cysteines at positions 93 and 98 are disulfide-linked. Asparagine 142 carries an N-linked (GlcNAc...) asparagine glycan. The tract at residues aspartate 185 to arginine 560 is unit H. Residue histidine 230 coordinates Cu cation. Cysteine 236 and cysteine 246 are joined by a disulfide. N-linked (GlcNAc...) asparagine glycosylation occurs at asparagine 240. Residues cysteine 247–histidine 249 constitute a cross-link (2'-(S-cysteinyl)-histidine (Cys-His)). Cu cation contacts are provided by histidine 249, histidine 258, histidine 358, histidine 362, and histidine 389. 2 disulfides stabilise this stretch: cysteine 348–cysteine 415 and cysteine 476–cysteine 482.

This sequence belongs to the tyrosinase family. Hemocyanin subfamily. As to quaternary structure, decamers of large identical subunits (390 kDa), each containing 8 globular oxygen-binding functional units. It depends on Cu(2+) as a cofactor.

In terms of biological role, hemocyanins are copper-containing oxygen carriers occurring freely dissolved in the hemolymph of many mollusks and arthropods. This Sepia officinalis (Common cuttlefish) protein is Hemocyanin, units G and H.